The primary structure comprises 354 residues: GTPase Obg (354 aa).

Residues 1-159 form the Obg domain; it reads MKFVDEVKIH…RDLVLELKLL (159 aa). The OBG-type G domain maps to 160–333; it reads ADVGIVGYPN…LLDAVGRALF (174 aa). Residues 166 to 173, 191 to 195, 212 to 215, 283 to 286, and 314 to 316 each bind GTP; these read GYPNAGKS, FTTLT, DIPG, TKID, and SAV. The Mg(2+) site is built by S173 and T193.

The protein belongs to the TRAFAC class OBG-HflX-like GTPase superfamily. OBG GTPase family. In terms of assembly, monomer. Requires Mg(2+) as cofactor.

The protein localises to the cytoplasm. Its function is as follows. An essential GTPase which binds GTP, GDP and possibly (p)ppGpp with moderate affinity, with high nucleotide exchange rates and a fairly low GTP hydrolysis rate. Plays a role in control of the cell cycle, stress response, ribosome biogenesis and in those bacteria that undergo differentiation, in morphogenesis control. This chain is GTPase Obg, found in Anaeromyxobacter dehalogenans (strain 2CP-1 / ATCC BAA-258).